Reading from the N-terminus, the 357-residue chain is MNPYWSALVRDLKPYVPGEQPKLDNLVKLNTNENPYPPSPKVLAAIRGELGASLRLYPDPNAELLKQAIARYHGVGANQVFVGNGSDEVLAHAFQALLKQTRPILFPDITYSFYPVYCGLYDIAHETVPLTESFEIRIEDYLRPNGGVVFPNPNAPTGRLLPLADIETLLSKNRDSVVIVDEAYIDFGGESAAALVNRFPHLLVIQTLSKSRSLAGLRVGFALGEPGLIEALERVKGSFNSYPLDRLAIVGGVAAFDDRDHFEWSRQAIMWTRQWLSRGLAELGFEVLPSAANFVFVRHPRHDGAELAAALRDRHIIVRHFKLPRIDQFLRITVGTEGECQILLDALSELVAGQAAA.

Lys-210 bears the N6-(pyridoxal phosphate)lysine mark.

The protein belongs to the class-II pyridoxal-phosphate-dependent aminotransferase family. Histidinol-phosphate aminotransferase subfamily. In terms of assembly, homodimer. Pyridoxal 5'-phosphate serves as cofactor.

The enzyme catalyses L-histidinol phosphate + 2-oxoglutarate = 3-(imidazol-4-yl)-2-oxopropyl phosphate + L-glutamate. It functions in the pathway amino-acid biosynthesis; L-histidine biosynthesis; L-histidine from 5-phospho-alpha-D-ribose 1-diphosphate: step 7/9. This chain is Histidinol-phosphate aminotransferase 1, found in Methylococcus capsulatus (strain ATCC 33009 / NCIMB 11132 / Bath).